Reading from the N-terminus, the 504-residue chain is Pre-mRNA-processing factor 19 (504 aa).

Ser-2 is subject to N-acetylserine. A U-box domain is found at 2-73; sequence SLICSISNEV…KPPSATSIPA (72 aa). Residues 68 to 223 form a may mediate interaction with PSMC5 region; that stretch reads ATSIPAILKA…VGLHSASIPG (156 aa). Lys-122, Lys-179, Lys-244, and Lys-261 each carry N6-acetyllysine. The WD 1 repeat unit spans residues 219 to 259; sequence ASIPGILALDLCPSDTNKILTGGADKNVVVFDKSSEQILAT. 6 WD repeats span residues 262-301, 304-345, 348-387, 390-429, 433-472, and 473-503; these read GHTK…CVQV, AHES…TKVT, TSGC…NVAN, GHSG…NFKT, DNNF…LHFT, and EHSG…KFYS.

Belongs to the WD repeat PRP19 family. As to quaternary structure, homotetramer. Component of activated, catalytic and post-catalytic spliceosomes. Component of the Prp19 complex/PRP19C/Nineteen complex/NTC and related complexes described as PRP19-CDC5L splicing complex and PSO4 complex. A homotetramer of PRPF19, CDC5L, PLRG1 and BCAS2 constitute the core of those complexes. The interaction with CDC5L, PLRG1 and BCAS2 is direct within this core complex. At least three less stably associated proteins CTNNBL1, CWC15 and HSPA8 are found in the Prp19 complex. The Prp19 complex associates with the spliceosome during its assembly and remodeling recruiting additional proteins. Component of the XAB2 complex, a multimeric protein complex composed of XAB2, PRPF19, AQR, ZNF830, ISY1, and PPIE. Interacts with CWC22 and EIF4A3 in an RNA-independent manner. Interacts with RPA1 and RPA2; the PRP19-CDC5L complex is recruited to the sites of DNA repair where it interacts with the replication protein A complex (RPA). Interacts with SETMAR; required for SETMAR recruitment to site of DNA damage. Interacts with U2AF2; the interaction is direct and recruits the Prp19 complex to RNA polymerase II C-terminal domain (CTD) and the pre-mRNA. Interacts with PRPF3. Interacts with APEX1, DNTT and PSMB4. Interacts with PSMC5. Interacts with KNSTRN. Interacts (via N-terminus) with CDC5L. Interacts with KHDC4. Interacts with USB1. Interacts with DDX41.

It is found in the nucleus. The protein localises to the nucleoplasm. It localises to the cytoplasm. Its subcellular location is the cytoskeleton. The protein resides in the spindle. It is found in the lipid droplet. It catalyses the reaction S-ubiquitinyl-[E2 ubiquitin-conjugating enzyme]-L-cysteine + [acceptor protein]-L-lysine = [E2 ubiquitin-conjugating enzyme]-L-cysteine + N(6)-ubiquitinyl-[acceptor protein]-L-lysine.. Its pathway is protein modification; protein ubiquitination. Ubiquitin-protein ligase which is a core component of several complexes mainly involved pre-mRNA splicing and DNA repair. Required for pre-mRNA splicing as component of the spliceosome. Core component of the PRP19C/Prp19 complex/NTC/Nineteen complex which is part of the spliceosome and participates in its assembly, its remodeling and is required for its activity. During assembly of the spliceosome, mediates 'Lys-63'-linked polyubiquitination of the U4 spliceosomal protein PRPF3. Ubiquitination of PRPF3 allows its recognition by the U5 component PRPF8 and stabilizes the U4/U5/U6 tri-snRNP spliceosomal complex. Recruited to RNA polymerase II C-terminal domain (CTD) and the pre-mRNA, it may also couple the transcriptional and spliceosomal machineries. The XAB2 complex, which contains PRPF19, is also involved in pre-mRNA splicing, transcription and transcription-coupled repair. Beside its role in pre-mRNA splicing PRPF19, as part of the PRP19-CDC5L complex, plays a role in the DNA damage response/DDR. It is recruited to the sites of DNA damage by the RPA complex where PRPF19 directly ubiquitinates RPA1 and RPA2. 'Lys-63'-linked polyubiquitination of the RPA complex allows the recruitment of the ATR-ATRIP complex and the activation of ATR, a master regulator of the DNA damage response. May also play a role in DNA double-strand break (DSB) repair by recruiting the repair factor SETMAR to altered DNA. As part of the PSO4 complex may also be involved in the DNA interstrand cross-links/ICLs repair process. In addition, may also mediate 'Lys-48'-linked polyubiquitination of substrates and play a role in proteasomal degradation. May play a role in the biogenesis of lipid droplets. May play a role in neural differentiation possibly through its function as part of the spliceosome. This Bos taurus (Bovine) protein is Pre-mRNA-processing factor 19 (PRPF19).